The following is a 252-amino-acid chain: Ribosomal RNA small subunit methyltransferase J (252 aa).

S-adenosyl-L-methionine contacts are provided by residues 104–105 (RD), 120–121 (ER), and D174.

Belongs to the methyltransferase superfamily. RsmJ family.

It is found in the cytoplasm. It carries out the reaction guanosine(1516) in 16S rRNA + S-adenosyl-L-methionine = N(2)-methylguanosine(1516) in 16S rRNA + S-adenosyl-L-homocysteine + H(+). Functionally, specifically methylates the guanosine in position 1516 of 16S rRNA. In Mannheimia succiniciproducens (strain KCTC 0769BP / MBEL55E), this protein is Ribosomal RNA small subunit methyltransferase J.